We begin with the raw amino-acid sequence, 236 residues long: 2-phospho-L-lactate guanylyltransferase (236 aa).

It belongs to the CofC family. As to quaternary structure, homodimer.

It catalyses the reaction (2S)-2-phospholactate + GTP + H(+) = (2S)-lactyl-2-diphospho-5'-guanosine + diphosphate. It participates in cofactor biosynthesis; coenzyme F420 biosynthesis. Functionally, guanylyltransferase that catalyzes the activation of (2S)-2-phospholactate (2-PL) as (2S)-lactyl-2-diphospho-5'-guanosine, via the condensation of 2-PL with GTP. It is involved in the biosynthesis of coenzyme F420, a hydride carrier cofactor. This Natrialba magadii (strain ATCC 43099 / DSM 3394 / CCM 3739 / CIP 104546 / IAM 13178 / JCM 8861 / NBRC 102185 / NCIMB 2190 / MS3) (Natronobacterium magadii) protein is 2-phospho-L-lactate guanylyltransferase.